Reading from the N-terminus, the 193-residue chain is MRTFFRPALAAIIIFSVLTGVIYPALVTVIAQVTFPGQANGSLIEQAGQQRGSSLIGQQFDQPEYFWGRLSATGPVPYNAAASSGSNYGPLNPALAEAVQARIDALKAADPSNQLPIPVDLVTASASGLDPEISPAAANYQVQRVAAARGLAVEQVQQLVEQHTSQRTLGVLGEPRVNVLQLNIALDQIKSLD.

A helical transmembrane segment spans residues 10–30; it reads AAIIIFSVLTGVIYPALVTVI.

The protein belongs to the KdpC family. As to quaternary structure, the system is composed of three essential subunits: KdpA, KdpB and KdpC.

Its subcellular location is the cell membrane. Functionally, part of the high-affinity ATP-driven potassium transport (or Kdp) system, which catalyzes the hydrolysis of ATP coupled with the electrogenic transport of potassium into the cytoplasm. This subunit acts as a catalytic chaperone that increases the ATP-binding affinity of the ATP-hydrolyzing subunit KdpB by the formation of a transient KdpB/KdpC/ATP ternary complex. This is Potassium-transporting ATPase KdpC subunit from Herpetosiphon aurantiacus (strain ATCC 23779 / DSM 785 / 114-95).